The primary structure comprises 591 residues: Mono(ADP-ribosyl)transferase SpvB (591 aa).

Residues 373 to 576 (PMMGGNSSRP…LRLSDDATAD (204 aa)) form the TR mART core domain. Catalysis depends on residues R471, S501, and E538.

Belongs to the SpvB family.

The protein localises to the secreted. It catalyses the reaction L-arginyl-[protein] + NAD(+) = N(omega)-(ADP-D-ribosyl)-L-arginyl-[protein] + nicotinamide + H(+). Its function is as follows. Mono-ADP-ribosylates eukaryotic muscle and non-muscle actin on 'Arg-177'. ADP-ribosylation prevents the polymerization of G-actin to F-actin, causing actin filament depolymerization, destruction of the cytoskeleton and cytotoxicity. Does not possess NAD(+)-glycohydrolase activity, unlike most mART enzymes. The chain is Mono(ADP-ribosyl)transferase SpvB (spvB) from Salmonella enteritidis.